The chain runs to 2355 residues: MEMRALGSSCSTGNGGSAPITLTNISPWITTVFPSTVKLRSSLRTFKGVSSRVRTFKGVSSTRVLSRTKQQFPLFCFLNPDPISFLENDVSEAERTVVLPDGSVNGAGSVNGYHSDVVPGRNVAEVNEFCKALGGKRPIHSILVATNGMAAVKFIRSVRTWAYETFGSEKAVKLVAMATPEDMRINAEHIRIADQFVEVPGGTNNNNYANVQLIVEMAEVTRVDAVWPGWGHASENPELPDALKEKGIIFLGPPADSMIALGDKIGSSLIAQAADVPTLPWSGSHVKIPPGRSLVTVPEEIYKKACVYTTEEAIASCQVVGYPAMIKASWGGGGKGIRKVHNDDEVRALFKQVQGEVPGSPIFIMKVASQSRHLEAQLLCDQYGNVAALHSRDCSVQRRHQKIIEEGPITVAPQETIKKLEQAARRLAKSVNYVGAATVEYLYSMDTGEYYFLELNPRLQVEHPVTEWIAEVNLPAAQVAVGMGIPLWQIPEIRRFYGMEHGGGYDSWRKTSVVASPFDFDEAESLRPKGHCVAVRVTSEDPDDGFKPTSGEIQELSFKSKPNMWSYFSVKSGGGIHEFSDSQFGHVFAFGESRSVAIANMVLALKEIQIRGDIRTNVDYTIDLLHASDYRENKIHTGWLDSRIAMRVRAERPPWYLSVVGGALYKASTTSSAVVSDYVGYLEKGQIPPKHISLVHSQVSLNIEGSKYTIDVVRGGSGTYRLRMSNSEVVAEIHTLRDGGLLMQLDGKSHVIYAKEEATGTRLLIDGRTCLLQNDHDPSKLMAETPCKLLRYLVSDNSSIDTDTPYAEVEVMKMCMPLISPASGVIHFKLSEGQAMQAGELIAKLDLDDPSAVRKAKPFRGSFPRLGLPTAISGKVHQRCAATLNAARMILAGYDHKVDEVLQDLLNCLDSPELPFLQWQECFAVLATRLPKDLRNMLELKYKEFEIISKTSLTPDFPAKLLKGILEAHLSSCDEKERGSLERLIEPLMSLVKSYEGGRESHARLIVHSLFEEYLSVEELFNDNMLADVIERMRQQYKKDRLKIVDIVLSHQGIIHKNKLVLRLMEQLVYPNPAAYREKLIRFSALNHTNYSQLALKASQLLEQTKRSELRSNIARSLSELEMFTEAGENMDTPKRKSAISETMENLVSSSLAVEDALVGLFDHSDHTLQRRVVETYIHRLYQPYVVKESVRMQWHQSGVIASWEFLEHFERKNTGPDDHEISEKGIVAKSSKRKRGTMVIIKSLQFLPSIINASLRETNHSHCEYARAPLSGNMMHIAVVGINNQMSLLQDSGDEDQTQERVNKLAKILKEEEVSLTLCSAGVGVISCIIQRDEGRTPMRHSFHWLMEKQYYVEEPLLRHVEPPLSVYLELDKLKGYSNIQYSPSRDRQWHMYSVTDRPVPIKRMFLRSLVRQTTMNDGFLLQQGQDYQLSQTVLSMAFTSKCILRSLMNAMEELELNAHNAAMKPDHAHMFLCILREQQIDDLVPYPRRFEVNAEDEETTVETILEEATQEIHRSVGVRMHALGVCEWEVRLWLVSSGLANGAWRVVVANVTGRTCTVHIYREVEATGRNSLIYHSITKKGPLHGTLINGQYKPLNNLDRKRLAARRSNTTYCYDFPLAFETALELNWASQHSGVRKPCKNRLINVKELVFSNTEGSLGTSLIPVERPAGLNDIGMVAWILEMSTPEFPMGRKLLIVANDVTFKAGSFGPREDAFFLAVTELACTKKLPLIYLAANSGARLGVAEEVKACFKVGWSDEVSPGNDFQYIYLSSEDYARIGSSVIAHEVKLPSGETRWVIDTIVGKEDGLGVENLTGSGAIAGAYSRAYNETFTLTFVSGRSVGIGAYLARLGMRCIQRLDQPIILTGFSTLNKLLGREVYSSHMQLGGPKIMGTNGVVHLTVSDDLEGVSAILNWLSYIPAYVGGPLPVLAPLDPPERTVEYIPENSCDPRAAIAGINDNTGKWLGGIFDKNSFVETLEGWARTVVTGRAKLGGIPIGVVAVETQTVMHVIPADPGQLDSHERVVPQAGQVWFPDSAAKTAQALMDFNREQLPLFIIANWRGFSGGQRDLFEGILQAGSAIVENLRTYRQPVFVYIPMMGELRGGAWVVVDSQINSDYIEMYADETARGNVLEPEGMIEIKFRRKELLECMGRLDQTLINLKANIQDAKRNKAYANIELLQKQIKTREKQLLPVYTQIATKFAELHDTSMRMAAKGVIKSVVEWSGSRSFFYKKLYRRIAESSLVRNIRKASGDILSYKSAMGLIQDWFRKSEIAKGKEEAWTDDQLFFTWKDNVSNYEQKLSELRTQKLLNQLAEIGNSSDLQALPQGLANLLNKVDLSRREELVDAIRKVLG.

One can recognise a Biotin carboxylation domain in the interval 138–645 (PIHSILVATN…HTGWLDSRIA (508 aa)). The region spanning 291–485 (GRSLVTVPEE…AAQVAVGMGI (195 aa)) is the ATP-grasp domain. Position 317-374 (317-374 (CQVVGYPAMIKASWGGGGKGIRKVHNDDEVRALFKQVQGEVPGSPIFIMKVASQSRHL)) interacts with ATP. Mg(2+) is bound by residues glutamate 440, glutamate 454, and asparagine 456. Mn(2+) is bound by residues glutamate 440, glutamate 454, and asparagine 456. The active site involves arginine 458. The Biotinyl-binding domain occupies 772–846 (LQNDHDPSKL…QAGELIAKLD (75 aa)). Lysine 813 carries the post-translational modification N6-biotinyllysine. Threonine 1133 is subject to Phosphothreonine. Residue serine 1293 is modified to Phosphoserine. The CoA carboxyltransferase N-terminal domain occupies 1593–1932 (QYKPLNNLDR…YVGGPLPVLA (340 aa)). A carboxyltransferase region spans residues 1593 to 2251 (QYKPLNNLDR…ESSLVRNIRK (659 aa)). Residues arginine 1841, lysine 2142, and arginine 2144 each coordinate CoA. Positions 1936–2251 (PPERTVEYIP…ESSLVRNIRK (316 aa)) constitute a CoA carboxyltransferase C-terminal domain.

In terms of assembly, homodimer. Requires biotin as cofactor. It depends on Mg(2+) as a cofactor. Mn(2+) is required as a cofactor. In terms of tissue distribution, widely expressed at low levels.

It is found in the cytoplasm. It localises to the cytosol. It carries out the reaction hydrogencarbonate + acetyl-CoA + ATP = malonyl-CoA + ADP + phosphate + H(+). The enzyme catalyses N(6)-biotinyl-L-lysyl-[protein] + hydrogencarbonate + ATP = N(6)-carboxybiotinyl-L-lysyl-[protein] + ADP + phosphate + H(+). The protein operates within lipid metabolism; malonyl-CoA biosynthesis; malonyl-CoA from acetyl-CoA: step 1/1. Multifunctional enzyme that catalyzes the carboxylation of acetyl-CoA, forming malonyl-CoA, which is used in the plastid for fatty acid synthesis and in the cytosol in various biosynthetic pathways including fatty acid elongation. This is Acetyl-CoA carboxylase 2 (ACC2) from Arabidopsis thaliana (Mouse-ear cress).